Here is a 660-residue protein sequence, read N- to C-terminus: CXXC-type zinc finger protein 1 (660 aa).

At methionine 1 the chain carries N-acetylmethionine. A compositionally biased stretch (acidic residues) spans 1 to 14; that stretch reads MEGDGSDLEPPDAG. Positions 1–20 are disordered; sequence MEGDGSDLEPPDAGDDSKSE. Phosphoserine occurs at positions 6 and 19. The PHD-type zinc-finger motif lies at 28–76; sequence YCICRKPDINCFMIGCDNCNEWFHGDCIRITEKMAKAIREWYCRECREK. Residues 91–120 show a composition bias toward basic and acidic residues; sequence ERDGSERAGSEPRDEGGGRKRPASDPELQR. A disordered region spans residues 91 to 166; that stretch reads ERDGSERAGS…QQQQQQQQQI (76 aa). Position 124 is a phosphoserine (serine 124). The CXXC-type zinc-finger motif lies at 164-213; the sequence is QQIKRSARMCGECEACRRTEDCGHCDFCRDMKKFGGPNKIRQKCRLRQCQ. Zn(2+) is bound by residues cysteine 173, cysteine 176, cysteine 179, cysteine 185, cysteine 188, cysteine 191, cysteine 207, and cysteine 212. 2 disordered regions span residues 223 to 287 and 328 to 375; these read FPSS…SDED and AVKV…DPAS. At serine 228 the chain carries Phosphoserine. Threonine 231 is subject to Phosphothreonine. Residue lysine 254 forms a Glycyl lysine isopeptide (Lys-Gly) (interchain with G-Cter in SUMO2) linkage. A compositionally biased stretch (basic residues) spans 328 to 338; sequence AVKVKHVKRRE. The span at 339 to 349 shows a compositional bias: basic and acidic residues; that stretch reads KKSEKKKEERY. The span at 350–362 shows a compositional bias: basic residues; it reads KRHRQKQKHKDKW. The segment covering 363-372 has biased composition (basic and acidic residues); the sequence is KHPERADAKD. The stretch at 426-479 forms a coiled coil; it reads AEEHGKKLLERIRREQQSARTRLQEMERRFHELEAIILRAKQQAVREDEENNEN.

In terms of assembly, component of the SET1 complex, at least composed of the catalytic subunit (SETD1A or SETD1B), WDR5, WDR82, RBBP5, ASH2L/ASH2, CXXC1/CFP1, HCFC1 and DPY30. Interacts with SETD1A. Interacts with ZNF335. Interacts with PRDM9; this interaction does not link PRDM9-activated recombination hotspot sites with DSB machinery and is not required for the hotspot recognition pathway. Interacts with histone H3K4me3. Expressed in seminiferous tubules and in both germ cells and Sertoli cells. Highly expressed in spermatogonia, weakly expressed in leptonema and zygonema, and then again high expression in pachynema and diplonema, decreasing to undetectable levels in spermatids.

Its subcellular location is the nucleus speckle. The protein localises to the nucleus. Its function is as follows. Transcriptional activator that exhibits a unique DNA binding specificity for CpG unmethylated motifs with a preference for CpGG. The chain is CXXC-type zinc finger protein 1 (Cxxc1) from Mus musculus (Mouse).